Here is a 617-residue protein sequence, read N- to C-terminus: DNA double-strand break repair protein Mre11 (617 aa).

Mn(2+) contacts are provided by Asp12, His14, Asp53, and Asn88. His89 serves as the catalytic Proton donor. Residues His158, Asp189, and His191 each coordinate Mn(2+). Positions 395–432 (SPVDPSSSVSSIESSGSVSPIDSVSTVSPSSPSSSAII) are enriched in low complexity. Disordered stretches follow at residues 395–437 (SPVD…EPEE) and 513–617 (VEDE…GDYL). The span at 529–547 (APQSSSPVSFSDNSQTGFS) shows a compositional bias: polar residues. The segment covering 549-559 (ISPPESIPSPE) has biased composition (low complexity). Over residues 560–583 (ILKENSEADADEKPVDGKLSEEKP) the composition is skewed to basic and acidic residues.

Belongs to the MRE11/RAD32 family. As to quaternary structure, homodimer. Forms a heterotetramer composed of two Mre11 subunits and two Rad50 subunits. Requires Mn(2+) as cofactor.

With respect to regulation, nuclease activity is regulated by Rad50. Part of the Rad50/Mre11 complex, which is involved in the early steps of DNA double-strand break (DSB) repair. The complex may facilitate opening of the processed DNA ends to aid in the recruitment of HerA and NurA. Mre11 binds to DSB ends and has both double-stranded 3'-5' exonuclease activity and single-stranded endonuclease activity. The chain is DNA double-strand break repair protein Mre11 from Methanosarcina mazei (strain ATCC BAA-159 / DSM 3647 / Goe1 / Go1 / JCM 11833 / OCM 88) (Methanosarcina frisia).